Here is a 459-residue protein sequence, read N- to C-terminus: Ribulose bisphosphate carboxylase large chain (459 aa).

Lys-4 carries the N6,N6,N6-trimethyllysine modification. 2 residues coordinate substrate: Asn-113 and Thr-163. Lys-165 serves as the catalytic Proton acceptor. Lys-167 lines the substrate pocket. Residues Lys-191, Asp-193, and Glu-194 each contribute to the Mg(2+) site. At Lys-191 the chain carries N6-carboxylysine. The active-site Proton acceptor is the His-284. Substrate-binding residues include Arg-285, His-317, and Ser-369.

It belongs to the RuBisCO large chain family. Type I subfamily. Heterohexadecamer of 8 large chains and 8 small chains; disulfide-linked. The disulfide link is formed within the large subunit homodimers. Mg(2+) serves as cofactor. Post-translationally, the disulfide bond which can form in the large chain dimeric partners within the hexadecamer appears to be associated with oxidative stress and protein turnover.

The protein resides in the plastid. Its subcellular location is the chloroplast. The catalysed reaction is 2 (2R)-3-phosphoglycerate + 2 H(+) = D-ribulose 1,5-bisphosphate + CO2 + H2O. It carries out the reaction D-ribulose 1,5-bisphosphate + O2 = 2-phosphoglycolate + (2R)-3-phosphoglycerate + 2 H(+). Its function is as follows. RuBisCO catalyzes two reactions: the carboxylation of D-ribulose 1,5-bisphosphate, the primary event in carbon dioxide fixation, as well as the oxidative fragmentation of the pentose substrate in the photorespiration process. Both reactions occur simultaneously and in competition at the same active site. This chain is Ribulose bisphosphate carboxylase large chain, found in Nypa fruticans (Nypa palm).